The sequence spans 349 residues: GTPase Obg (349 aa).

In terms of domain architecture, Obg spans Met1–Ile159. Residues Ala160–Gly327 enclose the OBG-type G domain. Residues Gly166–Ser173, Phe191–His195, Asp212–Gly215, Asn279–Asp282, and Ser308–Val310 each bind GTP. Residues Ser173 and Thr193 each contribute to the Mg(2+) site.

Belongs to the TRAFAC class OBG-HflX-like GTPase superfamily. OBG GTPase family. Monomer. The cofactor is Mg(2+).

The protein localises to the cytoplasm. An essential GTPase which binds GTP, GDP and possibly (p)ppGpp with moderate affinity, with high nucleotide exchange rates and a fairly low GTP hydrolysis rate. Plays a role in control of the cell cycle, stress response, ribosome biogenesis and in those bacteria that undergo differentiation, in morphogenesis control. This chain is GTPase Obg, found in Rhodopseudomonas palustris (strain BisA53).